Here is a 116-residue protein sequence, read N- to C-terminus: Large ribosomal subunit protein bL19 (116 aa).

This sequence belongs to the bacterial ribosomal protein bL19 family.

This protein is located at the 30S-50S ribosomal subunit interface and may play a role in the structure and function of the aminoacyl-tRNA binding site. The polypeptide is Large ribosomal subunit protein bL19 (Clostridium beijerinckii (strain ATCC 51743 / NCIMB 8052) (Clostridium acetobutylicum)).